Consider the following 510-residue polypeptide: Ectonucleoside triphosphate diphosphohydrolase 1 (510 aa).

Residues 1-16 (MEDIKDSKVKRFCSKN) are Cytoplasmic-facing. The chain crosses the membrane as a helical span at residues 17–37 (ILIILGFTSILAVIALIAVGL). Topologically, residues 38-478 (TQNKPLPENV…SPPLPHSTYI (441 aa)) are extracellular. An N-linked (GlcNAc...) asparagine glycan is attached at N73. The cysteines at positions 84 and 108 are disulfide-linked. Residue E174 is the Proton acceptor of the active site. 3 N-linked (GlcNAc...) asparagine glycosylation sites follow: N226, N291, and N333. Intrachain disulfides connect C254–C300 and C281–C324. Disulfide bonds link C337/C342 and C391/C414. Residues N428 and N457 are each glycosylated (N-linked (GlcNAc...) asparagine). A helical transmembrane segment spans residues 479–499 (GLMVLFSLLLVAVAITGLFIY). Topologically, residues 500 to 510 (SKPSYFWKEAV) are cytoplasmic.

It belongs to the GDA1/CD39 NTPase family. In terms of assembly, homodimer; disulfide-linked. It depends on Ca(2+) as a cofactor. Mg(2+) serves as cofactor. N-glycosylated. In terms of processing, the N-terminus is blocked. Post-translationally, palmitoylated on Cys-13; which is required for caveola targeting.

Its subcellular location is the membrane. It localises to the caveola. The catalysed reaction is a ribonucleoside 5'-triphosphate + 2 H2O = a ribonucleoside 5'-phosphate + 2 phosphate + 2 H(+). The enzyme catalyses a ribonucleoside 5'-triphosphate + H2O = a ribonucleoside 5'-diphosphate + phosphate + H(+). It catalyses the reaction a ribonucleoside 5'-diphosphate + H2O = a ribonucleoside 5'-phosphate + phosphate + H(+). It carries out the reaction ATP + 2 H2O = AMP + 2 phosphate + 2 H(+). The catalysed reaction is ATP + H2O = ADP + phosphate + H(+). The enzyme catalyses ADP + H2O = AMP + phosphate + H(+). It catalyses the reaction CTP + 2 H2O = CMP + 2 phosphate + 2 H(+). It carries out the reaction CTP + H2O = CDP + phosphate + H(+). The catalysed reaction is CDP + H2O = CMP + phosphate + H(+). The enzyme catalyses GTP + 2 H2O = GMP + 2 phosphate + 2 H(+). It catalyses the reaction GTP + H2O = GDP + phosphate + H(+). It carries out the reaction GDP + H2O = GMP + phosphate + H(+). The catalysed reaction is ITP + 2 H2O = IMP + 2 phosphate + 2 H(+). The enzyme catalyses ITP + H2O = IDP + phosphate + H(+). It catalyses the reaction IDP + H2O = IMP + phosphate + H(+). It carries out the reaction UTP + 2 H2O = UMP + 2 phosphate + 2 H(+). The catalysed reaction is UTP + H2O = UDP + phosphate + H(+). The enzyme catalyses UDP + H2O = UMP + phosphate + H(+). Catalyzes the hydrolysis of both di- and triphosphate nucleotides (NDPs and NTPs) and hydrolyze NTPs to nucleotide monophosphates (NMPs) in two distinct successive phosphate-releasing steps, with NDPs as intermediates and participates in the regulation of extracellular levels of nucleotides. By hydrolyzing proinflammatory ATP and platelet-activating ADP to AMP, it blocks platelet aggregation and supports blood flow. In Mus musculus (Mouse), this protein is Ectonucleoside triphosphate diphosphohydrolase 1.